We begin with the raw amino-acid sequence, 106 residues long: MVIKVFLASSSSSVTIKKRQQEVLQFLEANRIEYEEVDITMLEEKRQWMYKNIPKDRLPEQGNPLPPQIFNDNIYCGDYESFFESKESNTVFLFLQLKSRPAQKEL.

An SH3-binding motif is present at residues 61 to 67 (QGNPLPP).

This sequence belongs to the SH3BGR family.

Its subcellular location is the nucleus. This chain is SH3 domain-binding glutamic acid-rich-like protein 2 (sh3bgrl2), found in Xenopus tropicalis (Western clawed frog).